Consider the following 251-residue polypeptide: Pyruvate formate-lyase-activating enzyme (251 aa).

A Radical SAM core domain is found at 15 to 244 (VDGPGLRYIL…KAAYRYVNFK (230 aa)). Residues Cys29, Cys33, and Cys36 each contribute to the [4Fe-4S] cluster site. S-adenosyl-L-methionine contacts are provided by residues 35-37 (YCH), Gly79, 134-136 (DIK), and His207.

The protein belongs to the organic radical-activating enzymes family. [4Fe-4S] cluster serves as cofactor.

It is found in the cytoplasm. The enzyme catalyses glycyl-[formate C-acetyltransferase] + reduced [flavodoxin] + S-adenosyl-L-methionine = glycin-2-yl radical-[formate C-acetyltransferase] + semiquinone [flavodoxin] + 5'-deoxyadenosine + L-methionine + H(+). In terms of biological role, activation of pyruvate formate-lyase under anaerobic conditions by generation of an organic free radical, using S-adenosylmethionine and reduced flavodoxin as cosubstrates to produce 5'-deoxy-adenosine. This Staphylococcus aureus (strain N315) protein is Pyruvate formate-lyase-activating enzyme (pflA).